A 184-amino-acid chain; its full sequence is ATP synthase subunit b, chloroplastic (184 aa).

Residues 27 to 49 (LATNPINLSVVFGVLIFFGKGVL) form a helical membrane-spanning segment.

The protein belongs to the ATPase B chain family. In terms of assembly, F-type ATPases have 2 components, F(1) - the catalytic core - and F(0) - the membrane proton channel. F(1) has five subunits: alpha(3), beta(3), gamma(1), delta(1), epsilon(1). F(0) has four main subunits: a(1), b(1), b'(1) and c(10-14). The alpha and beta chains form an alternating ring which encloses part of the gamma chain. F(1) is attached to F(0) by a central stalk formed by the gamma and epsilon chains, while a peripheral stalk is formed by the delta, b and b' chains.

It localises to the plastid. The protein resides in the chloroplast thylakoid membrane. Functionally, f(1)F(0) ATP synthase produces ATP from ADP in the presence of a proton or sodium gradient. F-type ATPases consist of two structural domains, F(1) containing the extramembraneous catalytic core and F(0) containing the membrane proton channel, linked together by a central stalk and a peripheral stalk. During catalysis, ATP synthesis in the catalytic domain of F(1) is coupled via a rotary mechanism of the central stalk subunits to proton translocation. Its function is as follows. Component of the F(0) channel, it forms part of the peripheral stalk, linking F(1) to F(0). This is ATP synthase subunit b, chloroplastic from Barbarea verna (Land cress).